Consider the following 447-residue polypeptide: Cobyrinate a,c-diamide synthase (447 aa).

The GATase cobBQ-type domain occupies 247–435 (RIGVAIDEAF…IHIHAASCPQ (189 aa)). The active-site Nucleophile is the C329.

It belongs to the CobB/CbiA family. It depends on Mg(2+) as a cofactor.

The enzyme catalyses cob(II)yrinate + 2 L-glutamine + 2 ATP + 2 H2O = cob(II)yrinate a,c diamide + 2 L-glutamate + 2 ADP + 2 phosphate + 2 H(+). It carries out the reaction Ni-sirohydrochlorin + 2 L-glutamine + 2 ATP + 2 H2O = Ni-sirohydrochlorin a,c-diamide + 2 L-glutamate + 2 ADP + 2 phosphate + 2 H(+). It functions in the pathway cofactor biosynthesis; adenosylcobalamin biosynthesis; cob(II)yrinate a,c-diamide from sirohydrochlorin (anaerobic route): step 10/10. Catalyzes the ATP-dependent amidation of the two carboxylate groups at positions a and c of cobyrinate, using either L-glutamine or ammonia as the nitrogen source. Involved in the biosynthesis of the unique nickel-containing tetrapyrrole coenzyme F430, the prosthetic group of methyl-coenzyme M reductase (MCR), which plays a key role in methanogenesis and anaerobic methane oxidation. Catalyzes the ATP-dependent amidation of the two carboxylate groups at positions a and c of Ni-sirohydrochlorin, using L-glutamine or ammonia as the nitrogen source. This chain is Cobyrinate a,c-diamide synthase, found in Methanothermobacter thermautotrophicus (strain ATCC 29096 / DSM 1053 / JCM 10044 / NBRC 100330 / Delta H) (Methanobacterium thermoautotrophicum).